The primary structure comprises 355 residues: Erythronate-4-phosphate dehydrogenase (355 aa).

2 residues coordinate substrate: serine 45 and threonine 66. Aspartate 146 contributes to the NAD(+) binding site. Arginine 206 is a catalytic residue. Aspartate 229 lines the NAD(+) pocket. Glutamate 234 is a catalytic residue. The active-site Proton donor is histidine 251. An NAD(+)-binding site is contributed by glycine 254. Tyrosine 255 lines the substrate pocket.

Belongs to the D-isomer specific 2-hydroxyacid dehydrogenase family. PdxB subfamily. Homodimer.

Its subcellular location is the cytoplasm. The catalysed reaction is 4-phospho-D-erythronate + NAD(+) = (R)-3-hydroxy-2-oxo-4-phosphooxybutanoate + NADH + H(+). The protein operates within cofactor biosynthesis; pyridoxine 5'-phosphate biosynthesis; pyridoxine 5'-phosphate from D-erythrose 4-phosphate: step 2/5. Functionally, catalyzes the oxidation of erythronate-4-phosphate to 3-hydroxy-2-oxo-4-phosphonooxybutanoate. This Acinetobacter baumannii (strain AB307-0294) protein is Erythronate-4-phosphate dehydrogenase.